The sequence spans 759 residues: LPS-assembly protein LptD (759 aa).

Positions M1–A22 are cleaved as a signal peptide.

Belongs to the LptD family. In terms of assembly, component of the lipopolysaccharide transport and assembly complex. Interacts with LptE and LptA.

It is found in the cell outer membrane. Functionally, together with LptE, is involved in the assembly of lipopolysaccharide (LPS) at the surface of the outer membrane. The polypeptide is LPS-assembly protein LptD (Alcanivorax borkumensis (strain ATCC 700651 / DSM 11573 / NCIMB 13689 / SK2)).